The chain runs to 412 residues: 43 kDa receptor-associated protein of the synapse (412 aa).

Glycine 2 carries the N-myristoyl glycine lipid modification. 7 TPR repeats span residues 6-39 (TKQQIEKGLQLYQSNQTEKALQVWTKVLEKSSDL), 83-116 (LESYLNLARSNEKLCEFHKTISYCKTCLGLPGTR), 123-156 (GQVSLSMGNAFLGLSVFQKALESFEKALRYAHNN), 163-196 (CRVCCSLGSFYAQVKDYEKALFFPCKAAELVNNY), 206-239 (AMSQYHMAVAYRLLGRLGSAMECCEESMKIALQH), 246-279 (ALCLLCFADIHRSRGDLETAFPRYDSAMSIMTEI), and 286-319 (VQALLGVAKCWVARKALDKALDAIERAQDLAEEV). The residue at position 196 (tyrosine 196) is a Phosphotyrosine. The RING-type zinc finger occupies 363 to 403 (CGLCGESIGEKNSRLQALPCSHIFHLRCLQNNGTRSCPNCR). Serine 405 bears the Phosphoserine mark.

The protein belongs to the RAPsyn family. Post-translationally, ubiquitinated by the BCR(KLHL8) complex, leading to its degradation.

It localises to the cell membrane. It is found in the postsynaptic cell membrane. The protein resides in the cytoplasm. The protein localises to the cytoskeleton. Functionally, postsynaptic protein required for clustering of nicotinic acetylcholine receptors (nAChRs) at the neuromuscular junction. It may link the receptor to the underlying postsynaptic cytoskeleton, possibly by direct association with actin or spectrin. The chain is 43 kDa receptor-associated protein of the synapse (RAPSN) from Homo sapiens (Human).